A 433-amino-acid polypeptide reads, in one-letter code: GTPase Obg (433 aa).

Residues 1-159 (MAFRDVLDIE…RRVRLELRLI (159 aa)) form the Obg domain. The 168-residue stretch at 160–327 (ADVGLVGYPN…LRQALFDLLP (168 aa)) folds into the OBG-type G domain. ATP contacts are provided by residues 166 to 173 (GYPNAGKS), 191 to 195 (FTTLS), 214 to 217 (DIPG), 280 to 283 (NKIE), and 308 to 310 (SAK). Residues Ser173 and Thr193 each contribute to the Mg(2+) site. One can recognise an OCT domain in the interval 342-430 (PEEVREEPLT…IGSFRFEYYA (89 aa)).

This sequence belongs to the TRAFAC class OBG-HflX-like GTPase superfamily. OBG GTPase family. In terms of assembly, monomer. Mg(2+) serves as cofactor.

Its subcellular location is the cytoplasm. Functionally, an essential GTPase which binds GTP, GDP and possibly (p)ppGpp with moderate affinity, with high nucleotide exchange rates and a fairly low GTP hydrolysis rate. Plays a role in control of the cell cycle, stress response, ribosome biogenesis and in those bacteria that undergo differentiation, in morphogenesis control. This Deinococcus geothermalis (strain DSM 11300 / CIP 105573 / AG-3a) protein is GTPase Obg.